The chain runs to 461 residues: D-phenylhydantoinase (461 aa).

The a divalent metal cation site is built by H59, H61, and K151. An N6-carboxylysine modification is found at K151. Y156 is a binding site for substrate. H182 and H239 together coordinate a divalent metal cation. Position 286 (S286) interacts with substrate. Residue D313 participates in a divalent metal cation binding. Substrate is bound at residue N335.

The protein belongs to the metallo-dependent hydrolases superfamily. Hydantoinase/dihydropyrimidinase family. In terms of assembly, homotetramer. It depends on a divalent metal cation as a cofactor. Post-translationally, carboxylation allows a single lysine to coordinate two divalent metal cations.

It catalyses the reaction D-5-phenylhydantoin + H2O = N-carbamoyl-D-phenylglycine + H(+). Its function is as follows. Catalyzes the stereospecific hydrolysis of the cyclic amide bond of D-hydantoin derivatives with an aromatic side chains at the 5'-position. Has no activity on dihydropyrimidines. The physiological function is unknown. The polypeptide is D-phenylhydantoinase (Escherichia coli O7:K1 (strain IAI39 / ExPEC)).